The chain runs to 520 residues: CUGBP Elav-like family member 4 (520 aa).

3 RRM domains span residues 47-128, 135-215, and 435-513; these read IKLF…PADS, RKLF…FADT, and CNLF…LKRP.

It belongs to the CELF/BRUNOL family.

The protein resides in the nucleus. It localises to the cytoplasm. Its function is as follows. RNA-binding protein that may be implicated in the regulation of pre-mRNA alternative splicing. This is CUGBP Elav-like family member 4 (celf4) from Danio rerio (Zebrafish).